The sequence spans 104 residues: UPF0145 protein DET1617 (104 aa).

This sequence belongs to the UPF0145 family.

The chain is UPF0145 protein DET1617 from Dehalococcoides mccartyi (strain ATCC BAA-2266 / KCTC 15142 / 195) (Dehalococcoides ethenogenes (strain 195)).